The chain runs to 243 residues: tRNA (guanine-N(1)-)-methyltransferase (243 aa).

Residues Gly-108 and 127–132 (LGDFVL) contribute to the S-adenosyl-L-methionine site.

Belongs to the RNA methyltransferase TrmD family. As to quaternary structure, homodimer.

The protein resides in the cytoplasm. The catalysed reaction is guanosine(37) in tRNA + S-adenosyl-L-methionine = N(1)-methylguanosine(37) in tRNA + S-adenosyl-L-homocysteine + H(+). Functionally, specifically methylates guanosine-37 in various tRNAs. The chain is tRNA (guanine-N(1)-)-methyltransferase from Streptococcus equi subsp. equi (strain 4047).